A 330-amino-acid polypeptide reads, in one-letter code: Elongation factor Ts, mitochondrial (330 aa).

Residues 1 to 16 (MYRNCRKAFTFSLRHY) constitute a mitochondrion transit peptide.

This sequence belongs to the EF-Ts family.

Its subcellular location is the mitochondrion. Functionally, associates with the EF-Tu.GDP complex and induces the exchange of GDP to GTP. It remains bound to the aminoacyl-tRNA.EF-Tu.GTP complex up to the GTP hydrolysis stage on the ribosome. This is Elongation factor Ts, mitochondrial from Laccaria bicolor (strain S238N-H82 / ATCC MYA-4686) (Bicoloured deceiver).